The primary structure comprises 227 residues: MMLHLQGVLSKQQVAQCREVLDAAQWIDGNVTSGEQSAQAKRNQQLPEGSAAARAVGDAIQDALGRNPRFFSAALPLKVFPPLFNRYAGGDGFATHVDNAIRQLRGTDFRIRSDLSATLFLAEPDTYEGGELCIEDTYGVHRARLPAGDMVLYPASSLHHVSPVTRGVRVASFFWIQSMVRDDGERATLFQLDNDVQRLAAEKGSNDATVVSLTGIYHNLLRRWADA.

In terms of domain architecture, Fe2OG dioxygenase spans 78–178; sequence KVFPPLFNRY…RVASFFWIQS (101 aa). Residues histidine 96, aspartate 98, and histidine 159 each contribute to the Fe cation site. Arginine 169 contributes to the 2-oxoglutarate binding site.

Requires Fe(2+) as cofactor. L-ascorbate serves as cofactor.

This Paraburkholderia xenovorans (strain LB400) protein is PKHD-type hydroxylase Bxeno_B2194.